Here is a 237-residue protein sequence, read N- to C-terminus: Listeriolysin regulatory protein (237 aa).

The 76-residue stretch at 137 to 212 folds into the HTH crp-type domain; the sequence is NGKLGSICGQ…NSCFYVQNLD (76 aa).

Positively regulates expression of listeriolysin, of 1-phosphadidylinositol phosphodiesterase (PI-PLC) and other virulence factors. The protein is Listeriolysin regulatory protein (prfA) of Listeria monocytogenes serovar 1/2a (strain ATCC BAA-679 / EGD-e).